A 96-amino-acid polypeptide reads, in one-letter code: Large ribosomal subunit protein bL28 (96 aa).

This sequence belongs to the bacterial ribosomal protein bL28 family.

The sequence is that of Large ribosomal subunit protein bL28 from Leptospira biflexa serovar Patoc (strain Patoc 1 / Ames).